The chain runs to 2035 residues: Envoplakin (2035 aa).

Residues 1–27 (MFKGLSKGSQGKGSPKGSPAKGSPKGS) show a composition bias toward low complexity. 2 disordered regions span residues 1-37 (MFKG…AATQ) and 63-84 (KLQQ…QETG). The interval 1–841 (MFKGLSKGSQ…LEPALAVSAP (841 aa)) is globular 1. Residues 12-28 (KGSPKGSPAKGSPKGSP) are 4 X 4 AA tandem repeats of K-G-S-P. The span at 71-84 (GEQNQALQHQQETG) shows a compositional bias: polar residues. The Spectrin repeat unit spans residues 229-330 (YTHLQGCTKQ…LCICQESQLQ (102 aa)). The disordered stretch occupies residues 400 to 419 (QEVAPLPQRRNPSKQPLHVD). Residues 413 to 470 (KQPLHVDSICDWDSGEVQLLRGERYTLKDNADPYTWLVQGPGGETKSAPAACLCIPAP) enclose the SH3 domain. A coiled-coil region spans residues 842 to 1664 (KRLRVISLQE…EKERTLRDLH (823 aa)). A central fibrous rod domain region spans residues 842 to 1674 (KRLRVISLQE…TKVSREELNQ (833 aa)). Residues 1186-1227 (KQKPKVQLQERVSEIFQVLPETEQEIRRLRAQLQETGSKKSG) form a Plectin 1 repeat. Serine 1576 is modified (phosphoserine). The span at 1607-1631 (KQQKARQLQEEGRLLSQKTESERQK) shows a compositional bias: basic and acidic residues. The interval 1607–1637 (KQQKARQLQEEGRLLSQKTESERQKAAQRSQ) is disordered. A globular 2 region spans residues 1675–2035 (ETQTRETNLS…SPTLPRSCVR (361 aa)). A Plectin 2 repeat occupies 1679–1714 (RETNLSTKICILEPETGNDMSPYEAYKRGVIDRGQY). At serine 1800 the chain carries Phosphoserine. Plectin repeat units follow at residues 1819-1856 (FGLT…PITG), 1857-1894 (QKLL…NTST), 1895-1932 (QRLL…QESV), 1933-1970 (LPHL…EDLG), and 1971-2008 (QLLQ…PLSG). At serine 2026 the chain carries Phosphoserine.

Belongs to the plakin or cytolinker family. As to quaternary structure, may form a homodimer or a heterodimer with PPL.

It is found in the cell junction. The protein resides in the desmosome. Its subcellular location is the cornified envelope. The protein localises to the cytoplasm. It localises to the cytoskeleton. In terms of biological role, component of the cornified envelope of keratinocytes. May link the cornified envelope to desmosomes and intermediate filaments. This is Envoplakin (Evpl) from Mus musculus (Mouse).